A 493-amino-acid chain; its full sequence is E3 ubiquitin-protein ligase TRIM35 (493 aa).

Met1 carries the N-acetylmethionine modification. A phosphoserine mark is found at Ser4 and Ser8. The RING-type zinc finger occupies 21-61; that stretch reads CAVCYDPFRDAVTLRCGHNFCRGCVSRCWEVQVSPTCPVCK. The B box-type zinc finger occupies 96–137; it reads RFSRVCRLHRGQLSLFCLEDKELLCCSCQADPRHQGHRVQPV. The Zn(2+) site is built by Cys101, His104, Cys123, and His129. Positions 210-251 form a coiled coil; the sequence is AEETRQKQLLADEKMKQLTEETEVLAHEIERLQMEMKEDDVS. A B30.2/SPRY domain is found at 284–487; it reads LGSLQYRVWK…LRICPLHISV (204 aa).

The protein belongs to the TRIM/RBCC family. As to quaternary structure, interacts with PKM isoform M2, but not isoform M1; this interaction may compete with that between PKM and FGFR1, and hence reduces FGFR1-dependent tyrosine phosphorylation of PKM. Interacts with IRF7; this interaction promotes IRF7 proteasomal degradation. Interacts with TRAF3; this interaction promotes TRAF3 activation.

The protein resides in the cytoplasm. It is found in the nucleus. The catalysed reaction is S-ubiquitinyl-[E2 ubiquitin-conjugating enzyme]-L-cysteine + [acceptor protein]-L-lysine = [E2 ubiquitin-conjugating enzyme]-L-cysteine + N(6)-ubiquitinyl-[acceptor protein]-L-lysine.. It functions in the pathway protein modification; protein ubiquitination. Its function is as follows. E3 ubiquitin-protein ligase that participates in multiple biological processes including cell death, glucose metabolism, and in particular, the innate immune response. Mediates 'Lys-63'-linked polyubiquitination of TRAF3 thereby promoting type I interferon production via RIG-I signaling pathway. Can also catalyze 'Lys-48'-linked polyubiquitination and proteasomal degradation of viral proteins such as influenza virus PB2. Acts as a negative feedback regulator of TLR7- and TLR9-triggered signaling. Mechanistically, promotes the 'Lys-48'-linked ubiquitination of IRF7 and induces its degradation via a proteasome-dependent pathway. Reduces FGFR1-dependent tyrosine phosphorylation of PKM, inhibiting PKM-dependent lactate production, glucose metabolism, and cell growth. The chain is E3 ubiquitin-protein ligase TRIM35 (TRIM35) from Homo sapiens (Human).